The following is a 694-amino-acid chain: Polyphosphate kinase (694 aa).

Residue Asn45 coordinates ATP. Residues Arg367 and Arg397 each contribute to the Mg(2+) site. His427 acts as the Phosphohistidine intermediate in catalysis. 3 residues coordinate ATP: Tyr460, Arg553, and His580.

This sequence belongs to the polyphosphate kinase 1 (PPK1) family. Mg(2+) serves as cofactor. Post-translationally, an intermediate of this reaction is the autophosphorylated ppk in which a phosphate is covalently linked to a histidine residue through a N-P bond.

The catalysed reaction is [phosphate](n) + ATP = [phosphate](n+1) + ADP. Functionally, catalyzes the reversible transfer of the terminal phosphate of ATP to form a long-chain polyphosphate (polyP). This Campylobacter jejuni subsp. jejuni serotype O:6 (strain 81116 / NCTC 11828) protein is Polyphosphate kinase.